The primary structure comprises 468 residues: 6-phospho-beta-galactosidase (468 aa).

D-galactose 6-phosphate is bound by residues glutamine 19, histidine 116, asparagine 159, glutamate 160, and asparagine 297. Glutamate 160 acts as the Proton donor in catalysis. Glutamate 375 (nucleophile) is an active-site residue. D-galactose 6-phosphate contacts are provided by serine 428, tryptophan 429, lysine 435, and tyrosine 437.

This sequence belongs to the glycosyl hydrolase 1 family.

It carries out the reaction a 6-phospho-beta-D-galactoside + H2O = D-galactose 6-phosphate + an alcohol. Its pathway is carbohydrate metabolism; lactose degradation; D-galactose 6-phosphate and beta-D-glucose from lactose 6-phosphate: step 1/1. The sequence is that of 6-phospho-beta-galactosidase from Streptococcus uberis (strain ATCC BAA-854 / 0140J).